A 337-amino-acid polypeptide reads, in one-letter code: 25S rRNA (adenine(2142)-N(1))-methyltransferase (337 aa).

S-adenosyl-L-methionine-binding residues include Gly-180 and Asp-201.

Belongs to the BMT2 family.

The protein resides in the nucleus. It localises to the nucleolus. It carries out the reaction adenosine(2142) in 25S rRNA + S-adenosyl-L-methionine = N(1)-methyladenosine(2142) in 25S rRNA + S-adenosyl-L-homocysteine + H(+). Functionally, S-adenosyl-L-methionine-dependent methyltransferase that specifically methylates the N(1) position of adenine 2142 in 25S rRNA. N(1)-methyladenine(2142) in 25S rRNA is present in helix 65, a region that accounts for most of the intersubunit surface of the large subunit. This is 25S rRNA (adenine(2142)-N(1))-methyltransferase from Saccharomyces cerevisiae (strain ATCC 204508 / S288c) (Baker's yeast).